The sequence spans 229 residues: Uracil-DNA glycosylase (229 aa).

The Proton acceptor role is filled by aspartate 65.

This sequence belongs to the uracil-DNA glycosylase (UDG) superfamily. UNG family.

Its subcellular location is the cytoplasm. The enzyme catalyses Hydrolyzes single-stranded DNA or mismatched double-stranded DNA and polynucleotides, releasing free uracil.. Its function is as follows. Excises uracil residues from the DNA which can arise as a result of misincorporation of dUMP residues by DNA polymerase or due to deamination of cytosine. In Limosilactobacillus reuteri (strain DSM 20016) (Lactobacillus reuteri), this protein is Uracil-DNA glycosylase.